The following is a 134-amino-acid chain: Large ribosomal subunit protein uL16c (134 aa).

The protein belongs to the universal ribosomal protein uL16 family. Part of the 50S ribosomal subunit.

Its subcellular location is the plastid. The protein localises to the chloroplast. The chain is Large ribosomal subunit protein uL16c from Guillardia theta (Cryptophyte).